The primary structure comprises 431 residues: MRMIIKNGTVIDGFGSEATADILIDYGIIKAIDKNIQVSDGIVIDATGKYVLPGFVDMHTHLRQPGFEEKETIKTGTEAAATGGYTTVACMPNTNPPIDNEIVVEYVKSIAQREGVVKVLPIGAMTKGMKGEEITEMAKLKKAGVVALSDDGFPIMSAGLMKRIMTYGKMYDLLMITHCEDKALSGEGVMNSGVISTMIGLKGIPREAEEVMLARNIILAKSTGVRLHIAHISTKGSVELIREAKEKGVKITAEVTPHNLTLTDEAVYNYDTNTKAYPPLRTREDIEALIEGLKDGTIDAIATDHAPHTKDDKKVPYDMAAFGISGLETAFSVINTFLVQTGKITIKELVNYMSINPAKILGISSGIKVGSIADIVIVDPYEEYVVDKDKFKSKGKNTPFHGMRLKGVVDCTIVEGEIKYKKDRKTEKVEV.

Residues His59 and His61 each coordinate Zn(2+). Residues 61-63 and Asn93 contribute to the substrate site; that span reads HLR. Asp151, His178, His231, and Asp304 together coordinate Zn(2+). Residue Asp304 is part of the active site. Substrate contacts are provided by residues His308 and 322 to 323; that span reads FG.

Belongs to the metallo-dependent hydrolases superfamily. DHOase family. Class I DHOase subfamily. Zn(2+) is required as a cofactor.

It carries out the reaction (S)-dihydroorotate + H2O = N-carbamoyl-L-aspartate + H(+). The protein operates within pyrimidine metabolism; UMP biosynthesis via de novo pathway; (S)-dihydroorotate from bicarbonate: step 3/3. Catalyzes the reversible cyclization of carbamoyl aspartate to dihydroorotate. The polypeptide is Dihydroorotase (Thermoanaerobacter sp. (strain X514)).